We begin with the raw amino-acid sequence, 350 residues long: Cell division protein ZipA (350 aa).

Over Met1–Leu6 the chain is Periplasmic. The helical transmembrane segment at Val7–Ile27 threads the bilayer. At Arg28–Ala350 the chain is on the cytoplasmic side. Disordered stretches follow at residues Lys36–Phe55, Val65–Arg136, and Arg187–Leu213. 2 stretches are compositionally biased toward basic and acidic residues: residues Val65 to Ala109 and Ala116 to Pro131.

It belongs to the ZipA family. As to quaternary structure, interacts with FtsZ via their C-terminal domains.

It localises to the cell inner membrane. Functionally, essential cell division protein that stabilizes the FtsZ protofilaments by cross-linking them and that serves as a cytoplasmic membrane anchor for the Z ring. Also required for the recruitment to the septal ring of downstream cell division proteins. This Shewanella amazonensis (strain ATCC BAA-1098 / SB2B) protein is Cell division protein ZipA.